Consider the following 761-residue polypeptide: 5-methyltetrahydropteroyltriglutamate--homocysteine methyltransferase (761 aa).

5-methyltetrahydropteroyltri-L-glutamate is bound by residues 16-19 (RELK) and Lys-118. L-homocysteine-binding positions include 436-438 (IGS) and Glu-489. L-methionine-binding positions include 436–438 (IGS) and Glu-489. Residues 520–521 (RC) and Trp-566 each bind 5-methyltetrahydropteroyltri-L-glutamate. Asp-604 serves as a coordination point for L-homocysteine. Residue Asp-604 coordinates L-methionine. Glu-610 contacts 5-methyltetrahydropteroyltri-L-glutamate. Zn(2+) contacts are provided by His-646, Cys-648, and Glu-670. His-699 (proton donor) is an active-site residue. Residue Cys-731 participates in Zn(2+) binding.

It belongs to the vitamin-B12 independent methionine synthase family. It depends on Zn(2+) as a cofactor.

It carries out the reaction 5-methyltetrahydropteroyltri-L-glutamate + L-homocysteine = tetrahydropteroyltri-L-glutamate + L-methionine. Its pathway is amino-acid biosynthesis; L-methionine biosynthesis via de novo pathway; L-methionine from L-homocysteine (MetE route): step 1/1. Its function is as follows. Catalyzes the transfer of a methyl group from 5-methyltetrahydrofolate to homocysteine resulting in methionine formation. The sequence is that of 5-methyltetrahydropteroyltriglutamate--homocysteine methyltransferase from Vibrio cholerae serotype O1 (strain ATCC 39315 / El Tor Inaba N16961).